The primary structure comprises 353 residues: Trans-enoyl reductase RAP2 (353 aa).

46–49 is a binding site for NADP(+); it reads CDHK. Residue 131 to 138 coordinates substrate; that stretch reads TGLSTIGM. NADP(+) contacts are provided by residues 189–192, Y207, and 254–255; these read SPRN and LE. 274–278 contributes to the substrate binding site; sequence GMALL. Position 343–344 (343–344) interacts with NADP(+); the sequence is VS.

The protein belongs to the zinc-containing alcohol dehydrogenase family. Monomer.

It functions in the pathway secondary metabolite biosynthesis. Its function is as follows. Trans-enoyl reductase; part of the gene cluster that mediates the biosynthesis of a tyrosine-derived cytochalasan acting as a fungal signal recognized by resistant rice plants and leads to avirulence in Pi33 resistant rice cultivars. The first step in the pathway is catalyzed by the hybrid PKS-NRPS ACE1, assisted by the enoyl reductase RAP1, that are responsible for fusion of the tyrosine precursor and the polyketide backbone. The polyketide synthase module (PKS) of ACE1 is responsible for the synthesis of the polyketide backbone and the downstream nonribosomal peptide synthetase (NRPS) amidates the carboxyl end of the polyketide with the tyrosine precursor. Because ACE1 lacks a designated enoylreductase (ER) domain, the required activity is provided the enoyl reductase RAP1. Reduction by the hydrolyase ORFZ, followed by dehydration and intra-molecular Diels-Alder cyclization by the Diels-Alderase ORF3 then yield the required isoindolone-fused macrocycle. A number of oxidative steps catalyzed by the tailoring enzymes identified within the cluster, including cytochrome P450 monooxygenases CYP1 to CYP4, the FAD-linked oxidoreductase OXR2 and the short-chain dehydrogenase/reductase OXR1, are further required to afford the final cytochalasans that confer avirulence and which have still to be identified. The monooxygenase CYP1 has been shown to be a site-selective C-18 hydroxylase whereas the function of CYP3 is the site-selective epoxidation of the C-6/C-7 olefin that is present in some intermediate compounds. Finally, SYN2 and RAP2 are not required for avirulence in Pi33 resistant rice cultivars. The protein is Trans-enoyl reductase RAP2 of Pyricularia oryzae (strain 70-15 / ATCC MYA-4617 / FGSC 8958) (Rice blast fungus).